Reading from the N-terminus, the 259-residue chain is Tegument protein UL51 homolog (259 aa).

The S-palmitoyl cysteine; by host moiety is linked to residue Cys-9.

It belongs to the herpesviridae UL51 family. Oligomerizes. Interacts with ORF53; this interaction mediates ORF53 incorporation to virions. Post-translationally, phosphorylated. Palmitoylation is necessary for Golgi localization.

It localises to the virion tegument. It is found in the host cytoplasm. Its subcellular location is the host Golgi apparatus. Functionally, plays several roles during the time course of infection, including egress of virus particles from the perinuclear space and secondary envelopment of cytoplasmic capsids that bud into specific trans-Golgi network (TGN)-derived membranes. This Varicella-zoster virus (strain Dumas) (HHV-3) protein is Tegument protein UL51 homolog.